We begin with the raw amino-acid sequence, 157 residues long: SsrA-binding protein (157 aa).

Belongs to the SmpB family.

The protein resides in the cytoplasm. Functionally, required for rescue of stalled ribosomes mediated by trans-translation. Binds to transfer-messenger RNA (tmRNA), required for stable association of tmRNA with ribosomes. tmRNA and SmpB together mimic tRNA shape, replacing the anticodon stem-loop with SmpB. tmRNA is encoded by the ssrA gene; the 2 termini fold to resemble tRNA(Ala) and it encodes a 'tag peptide', a short internal open reading frame. During trans-translation Ala-aminoacylated tmRNA acts like a tRNA, entering the A-site of stalled ribosomes, displacing the stalled mRNA. The ribosome then switches to translate the ORF on the tmRNA; the nascent peptide is terminated with the 'tag peptide' encoded by the tmRNA and targeted for degradation. The ribosome is freed to recommence translation, which seems to be the essential function of trans-translation. The sequence is that of SsrA-binding protein from Bacillus licheniformis (strain ATCC 14580 / DSM 13 / JCM 2505 / CCUG 7422 / NBRC 12200 / NCIMB 9375 / NCTC 10341 / NRRL NRS-1264 / Gibson 46).